Here is a 668-residue protein sequence, read N- to C-terminus: Potassium-transporting ATPase ATP-binding subunit (668 aa).

A run of 4 helical transmembrane segments spans residues 31–51, 62–82, 213–233, and 243–263; these read MFLT…PSFF, FYVA…ISTA, TVFL…IFAI, and IVML…ALLP. Asp298 functions as the 4-aspartylphosphate intermediate in the catalytic mechanism. ATP is bound by residues Asp335, Glu339, 367–374, and Lys385; that span reads FSSETKFS. Residues Asp504 and Asp508 each contribute to the Mg(2+) site. Helical transmembrane passes span 573–593, 599–619, and 644–664; these read YFVI…VNIL, IVAV…LIPL, and IGGV…LIAW.

This sequence belongs to the cation transport ATPase (P-type) (TC 3.A.3) family. Type IA subfamily. As to quaternary structure, the system is composed of three essential subunits: KdpA, KdpB and KdpC.

It is found in the cell membrane. It catalyses the reaction K(+)(out) + ATP + H2O = K(+)(in) + ADP + phosphate + H(+). In terms of biological role, part of the high-affinity ATP-driven potassium transport (or Kdp) system, which catalyzes the hydrolysis of ATP coupled with the electrogenic transport of potassium into the cytoplasm. This subunit is responsible for energy coupling to the transport system and for the release of the potassium ions to the cytoplasm. The sequence is that of Potassium-transporting ATPase ATP-binding subunit from Thermoplasma volcanium (strain ATCC 51530 / DSM 4299 / JCM 9571 / NBRC 15438 / GSS1).